The chain runs to 393 residues: 4-O-methyl-glucuronoyl methylesterase (393 aa).

Positions 1–19 (MKLSAALLAIAAFANVASA) are cleaved as a signal peptide. Glutamine 20 carries the post-translational modification Pyrrolidone carboxylic acid. Residues cysteine 22 and cysteine 56 are joined by a disulfide bond. 2 N-linked (GlcNAc...) asparagine glycosylation sites follow: asparagine 103 and asparagine 168. Positions 203–208 (GCSRNG) match the GXSYXG catalytic site motif motif. 2 cysteine pairs are disulfide-bonded: cysteine 204–cysteine 340 and cysteine 236–cysteine 312. The active-site Nucleophile is serine 205. Substrate contacts are provided by lysine 209, glutamine 251, glutamate 259, and tryptophan 303. Residue histidine 339 is the Proton donor/acceptor of the active site.

Belongs to the carbohydrate esterase 15 (CE15) family.

It localises to the secreted. It catalyses the reaction a 4-O-methyl-alpha-D-glucuronosyl ester derivative + H2O = 4-O-methyl-alpha-D-glucuronate derivative + an alcohol + H(+). Functionally, glucuronoyl esterase which may play a significant role in biomass degradation, as it is considered to disconnect hemicellulose from lignin through the hydrolysis of the ester bond between 4-O-methyl-D-glucuronic acid residues of glucuronoxylans and aromatic alcohols of lignin. This Schizophyllum commune (strain H4-8 / FGSC 9210) (Split gill fungus) protein is 4-O-methyl-glucuronoyl methylesterase.